Consider the following 281-residue polypeptide: Lectin alpha chain (281 aa).

Residues Asn-35, Asn-82, and Asn-140 are each glycosylated (N-linked (GlcNAc...) asparagine).

Belongs to the leguminous lectin family. As to quaternary structure, tetramer of 2 alpha and 2 beta chains. In terms of processing, glycosylated. The beta chain is produced by partial proteolytic processing of the alpha chain.

In terms of biological role, D-galactose-binding lectin. This chain is Lectin alpha chain, found in Lablab purpureus (Hyacinth bean).